The chain runs to 89 residues: Small ribosomal subunit protein uS15 (89 aa).

Belongs to the universal ribosomal protein uS15 family. Part of the 30S ribosomal subunit. Forms a bridge to the 50S subunit in the 70S ribosome, contacting the 23S rRNA.

Its function is as follows. One of the primary rRNA binding proteins, it binds directly to 16S rRNA where it helps nucleate assembly of the platform of the 30S subunit by binding and bridging several RNA helices of the 16S rRNA. Forms an intersubunit bridge (bridge B4) with the 23S rRNA of the 50S subunit in the ribosome. This chain is Small ribosomal subunit protein uS15, found in Methylorubrum extorquens (strain CM4 / NCIMB 13688) (Methylobacterium extorquens).